A 353-amino-acid polypeptide reads, in one-letter code: UPF0283 membrane protein YcjF (353 aa).

Residues 1-19 (MSEPLKPRIDFAEPLKEEP) show a composition bias toward basic and acidic residues. Residues 1–35 (MSEPLKPRIDFAEPLKEEPTSAFKAQQTFSEAESR) form a disordered region. 3 consecutive transmembrane segments (helical) span residues 70–90 (MVMGGLALFGASVVGQGLQWT), 100–120 (VALGGCAAGALIIGAGVGSVV), and 213–233 (ESTLMIAVSPLALVDMAFIAW).

This sequence belongs to the UPF0283 family.

It is found in the cell inner membrane. The polypeptide is UPF0283 membrane protein YcjF (Salmonella choleraesuis (strain SC-B67)).